Here is a 782-residue protein sequence, read N- to C-terminus: DnaJ homolog subfamily C member 16 (782 aa).

Positions 1 to 25 (MEVRKLSISWQFLIVLVLILQILSA) are cleaved as a signal peptide. Over 26 to 535 (LDFDPYRVLG…DSIFHNNWRE (510 aa)) the chain is Cytoplasmic. Positions 29 to 93 (DPYRVLGVSR…EKRSNYDQYG (65 aa)) constitute a J domain. The Thioredoxin domain maps to 119–247 (FYFDESFFHF…LRQFVESLLP (129 aa)). The helical; Anchor for type IV membrane protein transmembrane segment at 536–556 (MMPLLSLIFSALFILFGTVIV) threads the bilayer. The Extracellular portion of the chain corresponds to 557 to 782 (QAFSDSNDER…FYIPSWPELD (226 aa)). The segment at 562–593 (SNDERESSPPEKEEAQEKTGKTEPSFTKENSS) is disordered. The span at 563-582 (NDERESSPPEKEEAQEKTGK) shows a compositional bias: basic and acidic residues. The segment covering 583-593 (TEPSFTKENSS) has biased composition (polar residues). N-linked (GlcNAc...) asparagine glycosylation is present at asparagine 631.

It is found in the endoplasmic reticulum membrane. Its function is as follows. Plays an important role in regulating the size of autophagosomes during the formation process. In Homo sapiens (Human), this protein is DnaJ homolog subfamily C member 16 (DNAJC16).